A 384-amino-acid polypeptide reads, in one-letter code: Cobalt-precorrin-5B C(1)-methyltransferase (384 aa).

This sequence belongs to the CbiD family.

The enzyme catalyses Co-precorrin-5B + S-adenosyl-L-methionine = Co-precorrin-6A + S-adenosyl-L-homocysteine. It functions in the pathway cofactor biosynthesis; adenosylcobalamin biosynthesis; cob(II)yrinate a,c-diamide from sirohydrochlorin (anaerobic route): step 6/10. Functionally, catalyzes the methylation of C-1 in cobalt-precorrin-5B to form cobalt-precorrin-6A. In Ruminiclostridium cellulolyticum (strain ATCC 35319 / DSM 5812 / JCM 6584 / H10) (Clostridium cellulolyticum), this protein is Cobalt-precorrin-5B C(1)-methyltransferase.